The chain runs to 115 residues: uncharacterized protein (115 aa).

This is an uncharacterized protein from Treponema pallidum (strain Nichols).